A 1372-amino-acid chain; its full sequence is DNA-directed RNA polymerase subunit beta (1372 aa).

This sequence belongs to the RNA polymerase beta chain family. As to quaternary structure, the RNAP catalytic core consists of 2 alpha, 1 beta, 1 beta' and 1 omega subunit. When a sigma factor is associated with the core the holoenzyme is formed, which can initiate transcription.

It carries out the reaction RNA(n) + a ribonucleoside 5'-triphosphate = RNA(n+1) + diphosphate. DNA-dependent RNA polymerase catalyzes the transcription of DNA into RNA using the four ribonucleoside triphosphates as substrates. This chain is DNA-directed RNA polymerase subunit beta, found in Rickettsia bellii (strain OSU 85-389).